The following is a 411-amino-acid chain: Heparan-sulfate 6-O-sulfotransferase 1 (411 aa).

Topologically, residues 11–17 (MVERASK) are cytoplasmic. Residues 18-37 (FVLVVAGSVCFMLILYQYAG) form a helical; Signal-anchor for type II membrane protein membrane-spanning segment. Topologically, residues 38 to 411 (PGLSLGAPGG…DYMSHIIEKW (374 aa)) are lumenal. 93 to 101 (HIQKTGGTT) contributes to the 3'-phosphoadenylyl sulfate binding site. Residues 123 to 124 (KK), arginine 140, tryptophan 145, and histidine 150 each bind substrate. Histidine 150 functions as the Proton acceptor in the catalytic mechanism. Residues arginine 185 and serine 193 each coordinate 3'-phosphoadenylyl sulfate. Substrate-binding residues include histidine 197 and tryptophan 204. Residue asparagine 264 is glycosylated (N-linked (GlcNAc...) asparagine). 317 to 319 (MQY) serves as a coordination point for 3'-phosphoadenylyl sulfate. Asparagine 320 carries an N-linked (GlcNAc...) asparagine glycan. 323–324 (RA) is a binding site for 3'-phosphoadenylyl sulfate. The stretch at 352-387 (KDLFQQRYQYKRQLERREQRLRSREERLLHRAKEAL) forms a coiled coil.

It belongs to the sulfotransferase 6 family. In terms of processing, N-glycosylated. As to expression, expressed in fetal brain.

It localises to the membrane. The enzyme catalyses alpha-D-glucosaminyl-[heparan sulfate](n) + 3'-phosphoadenylyl sulfate = 6-sulfo-alpha-D-glucosaminyl-[heparan sulfate](n) + adenosine 3',5'-bisphosphate + H(+). In terms of biological role, 6-O-sulfation enzyme which catalyzes the transfer of sulfate from 3'-phosphoadenosine 5'-phosphosulfate (PAPS) to position 6 of the N-sulfoglucosamine residue (GlcNS) of heparan sulfate. Critical for normal neuronal development where it may play a role in neuron branching. May also play a role in limb development. May prefer iduronic acid. The polypeptide is Heparan-sulfate 6-O-sulfotransferase 1 (Homo sapiens (Human)).